The sequence spans 352 residues: Peptide chain release factor 1 (352 aa).

An N5-methylglutamine modification is found at glutamine 233. The interval 288–309 (NAKDRKEQVGSGDRSERIRTYN) is disordered. Basic and acidic residues predominate over residues 289-306 (AKDRKEQVGSGDRSERIR).

The protein belongs to the prokaryotic/mitochondrial release factor family. Post-translationally, methylated by PrmC. Methylation increases the termination efficiency of RF1.

Its subcellular location is the cytoplasm. Its function is as follows. Peptide chain release factor 1 directs the termination of translation in response to the peptide chain termination codons UAG and UAA. The chain is Peptide chain release factor 1 (prfA) from Helicobacter pylori (strain J99 / ATCC 700824) (Campylobacter pylori J99).